A 418-amino-acid chain; its full sequence is MDATTIDLEQMGRAAKTAAMTLGQLTTLQKNTGLLAMAAALETHADTILAANKADLAAASALPEKFVDRLALTKARIADMAAGVRQVATLDDPTAQTDRAWVNEAGLTIAQKRVPLGVVGMIYEARPNVTVDAAALTFKSGNAVILRGGKEALHSNLALATVLQDALAAKELPRDAVQLITDPSRAVATQMMHLNGYIDVLIPRGGKGLIKAVVEQATVPVIETGAGNCHIYVDAHAQLQMAVAIVVNAKVQRPSVCNAAEKLLIHADVANEQLPVIAKALQDHGVELRGDERARAIVPSMHAATAEDWDTEYNDLIMAVKVVDSEEEAIQHINAHNTKHSEAIITDNYQNSQQFLQQVDAAVVYVNASTRFTDGYEFGFGAEIGISTQKLHARGPMGLAALTTIKYQVLGNGQIRKN.

The protein belongs to the gamma-glutamyl phosphate reductase family.

It is found in the cytoplasm. The catalysed reaction is L-glutamate 5-semialdehyde + phosphate + NADP(+) = L-glutamyl 5-phosphate + NADPH + H(+). The protein operates within amino-acid biosynthesis; L-proline biosynthesis; L-glutamate 5-semialdehyde from L-glutamate: step 2/2. Its function is as follows. Catalyzes the NADPH-dependent reduction of L-glutamate 5-phosphate into L-glutamate 5-semialdehyde and phosphate. The product spontaneously undergoes cyclization to form 1-pyrroline-5-carboxylate. This is Gamma-glutamyl phosphate reductase from Lacticaseibacillus paracasei (strain ATCC 334 / BCRC 17002 / CCUG 31169 / CIP 107868 / KCTC 3260 / NRRL B-441) (Lactobacillus paracasei).